A 178-amino-acid polypeptide reads, in one-letter code: MDALSPKKQPIALYPGTFDPVTLGHLDIIRRGARIFDHLIIAVAENPGKSPLFSSEERASMIRHEISRLENPTKSRIEVIIYNSLLMDCVESQGASVILRGLRAVADFEYEYQMAGMNQQINNKIETVFLMADSVLQPVASRLVKEIAFYNGNITPFVPPYVVQKLQEAVTRKKSFQD.

Thr-17 lines the substrate pocket. ATP-binding positions include 17-18 (TF) and His-25. The substrate site is built by Lys-49, Leu-86, and Arg-100. ATP contacts are provided by residues 101–103 (GLR), Glu-111, and 136–142 (LQPVASR).

The protein belongs to the bacterial CoaD family. In terms of assembly, homohexamer. It depends on Mg(2+) as a cofactor.

Its subcellular location is the cytoplasm. It carries out the reaction (R)-4'-phosphopantetheine + ATP + H(+) = 3'-dephospho-CoA + diphosphate. It participates in cofactor biosynthesis; coenzyme A biosynthesis; CoA from (R)-pantothenate: step 4/5. In terms of biological role, reversibly transfers an adenylyl group from ATP to 4'-phosphopantetheine, yielding dephospho-CoA (dPCoA) and pyrophosphate. This Zymomonas mobilis subsp. mobilis (strain ATCC 31821 / ZM4 / CP4) protein is Phosphopantetheine adenylyltransferase.